Here is a 353-residue protein sequence, read N- to C-terminus: tRNA pseudouridine synthase B (353 aa).

The active-site Nucleophile is the D39.

It belongs to the pseudouridine synthase TruB family. Type 1 subfamily.

It catalyses the reaction uridine(55) in tRNA = pseudouridine(55) in tRNA. Functionally, responsible for synthesis of pseudouridine from uracil-55 in the psi GC loop of transfer RNAs. This chain is tRNA pseudouridine synthase B, found in Wolbachia pipientis subsp. Culex pipiens (strain wPip).